The sequence spans 545 residues: MAAKEVKFGRSAREKMLRGVDILADAVKVTLGPKGRNVVIDKSFGAPRITKDGVTVAKEIELEDKFENMGAQMVREVASKTNDIAGDGTTTATVLAQAIVREGAKAVAAGMNPMDLKRGIDLAVAEVVKDLLAKAKKINTSDEVAQVGTISANGEKQIGLDIAEAMQKVGNEGVITVEEAKTAETELEVVEGMQFDRGYLSPYFVTNPEKMVADLEDAFILLHEKKLSNLQAMLPVLEAVVQTGKPLLIIAEDVEGEALATLVVNKLRGGLKIAAVKAPGFGDRRKAMLEDIAILTGGTVISEDLGIKLESVTLDMLGRAKKVSITKENTTIVDGAGQKSDIEGRVAQIKAQIEETTSDYDREKLQERLAKLAGGVAVIRVGGATEVEVKEKKDRIDDALNATRAAVQEGIVPGGGVALLRSSVKITVKGENDDQDAGVNIVRRALQSPARQIVENAGDEASIVVGKILEKNTDDFGYNAQTGEYGDMIAMGIIDPVKVVRTALQDAASVASLLITTEAMIAELPKKDAPAMPGGMGGMGGMDMM.

Residues 30–33 (TLGP), K51, 87–91 (DGTTT), G415, and D495 each bind ATP.

This sequence belongs to the chaperonin (HSP60) family. As to quaternary structure, forms a cylinder of 14 subunits composed of two heptameric rings stacked back-to-back. Interacts with the co-chaperonin GroES.

It localises to the cytoplasm. It catalyses the reaction ATP + H2O + a folded polypeptide = ADP + phosphate + an unfolded polypeptide.. In terms of biological role, together with its co-chaperonin GroES, plays an essential role in assisting protein folding. The GroEL-GroES system forms a nano-cage that allows encapsulation of the non-native substrate proteins and provides a physical environment optimized to promote and accelerate protein folding. The sequence is that of Chaperonin GroEL 4 from Rhizobium meliloti (strain 1021) (Ensifer meliloti).